Reading from the N-terminus, the 226-residue chain is Ras-related protein RGP1 (226 aa).

25 to 32 (GDSAVGKS) is a binding site for GTP. An Effector region motif is present at residues 47-55 (SKATIGVEF). GTP-binding positions include 73–77 (DTAGQ) and 131–134 (NKSD). Residues C223 and C224 are each lipidated (S-geranylgeranyl cysteine).

It belongs to the small GTPase superfamily. Rab family.

It localises to the cell membrane. Its function is as follows. May play an important role in plant growth and development. This is Ras-related protein RGP1 (RGP1) from Oryza sativa subsp. japonica (Rice).